An 805-amino-acid polypeptide reads, in one-letter code: Phenylalanine--tRNA ligase beta subunit (805 aa).

Residues 39–148 form the tRNA-binding domain; sequence APPFTGVVVA…AALRPGTDIR (110 aa). The 76-residue stretch at 399–474 folds into the B5 domain; that stretch reads PVREPVRMRL…RVYGFERIPD (76 aa). Mg(2+) is bound by residues Asp452, Asp458, Glu461, and Glu462. One can recognise an FDX-ACB domain in the interval 703 to 804; sequence SRQPAVVRDL…LVAAHNARQR (102 aa).

This sequence belongs to the phenylalanyl-tRNA synthetase beta subunit family. Type 1 subfamily. As to quaternary structure, tetramer of two alpha and two beta subunits. Mg(2+) is required as a cofactor.

The protein localises to the cytoplasm. It catalyses the reaction tRNA(Phe) + L-phenylalanine + ATP = L-phenylalanyl-tRNA(Phe) + AMP + diphosphate + H(+). This chain is Phenylalanine--tRNA ligase beta subunit, found in Bordetella bronchiseptica (strain ATCC BAA-588 / NCTC 13252 / RB50) (Alcaligenes bronchisepticus).